The primary structure comprises 307 residues: Probable inactive peptidyl-prolyl cis-trans isomerase-like 6 (307 aa).

Positions 141-304 (FLDISIDLYP…QNCVITASGQ (164 aa)) constitute a PPIase cyclophilin-type domain.

It belongs to the cyclophilin-type PPIase family.

Probable inactive PPIase with no peptidyl-prolyl cis-trans isomerase activity. The protein is Probable inactive peptidyl-prolyl cis-trans isomerase-like 6 of Bos taurus (Bovine).